The sequence spans 100 residues: Urease subunit gamma (100 aa).

The protein belongs to the urease gamma subunit family. In terms of assembly, heterotrimer of UreA (gamma), UreB (beta) and UreC (alpha) subunits. Three heterotrimers associate to form the active enzyme.

It localises to the cytoplasm. It carries out the reaction urea + 2 H2O + H(+) = hydrogencarbonate + 2 NH4(+). It functions in the pathway nitrogen metabolism; urea degradation; CO(2) and NH(3) from urea (urease route): step 1/1. In Mycolicibacterium vanbaalenii (strain DSM 7251 / JCM 13017 / BCRC 16820 / KCTC 9966 / NRRL B-24157 / PYR-1) (Mycobacterium vanbaalenii), this protein is Urease subunit gamma.